The sequence spans 198 residues: MSLSIDVTSLPSISSSIYKNESSSTTSTLSGKSIGRSEQYISPDAEAFNKYMLSKSPEDIGPSDSASNDPLTSFSIRSNAVKTNADAGVSMDSSTQSRPSSNVGCDQVDFSFNKGIKMNANLDSSISISTNSKKEKSKNEHKSRKHYPKIEAESDSDDYVLDDSDSDDGKCKNCKYKRKYFALRMRMKQVAMQLIEDL.

Over residues 16-30 (SIYKNESSSTTSTLS) the composition is skewed to low complexity. Disordered stretches follow at residues 16 to 37 (SIYK…IGRS), 53 to 72 (LSKS…DPLT), 85 to 104 (ADAG…SNVG), and 126 to 167 (ISIS…SDSD). At serine 67 the chain carries Phosphoserine; by host CK1. The segment covering 91–104 (MDSSTQSRPSSNVG) has biased composition (polar residues). Aspartate 92 serves as a coordination point for Mg(2+). Residues 153 to 166 (ESDSDDYVLDDSDS) are compositionally biased toward acidic residues. Phosphoserine; by host is present on residues serine 154, serine 156, serine 164, and serine 166.

Belongs to the rotavirus NSP5 family. As to quaternary structure, homodimer. Interacts with VP1. Interacts with VP2. Interacts with NSP2; this interaction leads to up-regulation of NSP5 hyperphosphorylation and formation of virus factories. Interacts with NSP6. Participates in the selective exclusion of host proteins from stress granules (SG) and P bodies (PB). Also participates in the sequestration of these remodeled organelles in viral factories. Mg(2+) serves as cofactor. Post-translationally, O-glycosylated. In terms of processing, hyperphosphorylated on serine residues, when in dimeric form. Phosphorylation by host CK1 is required for the hyperphosphorylation of NSP5 dimer.

It is found in the host cytoplasm. In terms of biological role, plays an essential role in the viral genome replication. Participates, together with NSP2, in the formation of viral factories (viroplasms), which are large inclusions in the host cytoplasm where replication intermediates are assembled and viral RNA replication takes place. Orchestrates the recruitment of viroplasmic proteins such as capsid proteins to these factories. Participates in the selective exclusion of host proteins from stress granules (SG) and P bodies (PB). Also participates in the sequestration of these remodeled organelles in viral factories. The protein is Non-structural protein 5 of Homo sapiens (Human).